Reading from the N-terminus, the 230-residue chain is Thioredoxin domain-containing protein PLP3A (230 aa).

Residues 89-173 form the Thioredoxin domain; that stretch reads VSEGDFLGEV…GVAMDRLVGF (85 aa). Positions 197-230 are disordered; that stretch reads LSKKKKEEDDEDAEYQESIRRSVRSSENLDSDSD.

It belongs to the phosducin family. In terms of assembly, interacts with TUBB2, TUBB3, TUBB4 and TUBB5. As to expression, expressed in embryos, shoot meristems, leaf primordia, root meristems, floral meristems and young floral buds.

The protein localises to the cytoplasm. The protein resides in the nucleus. In terms of biological role, tubulin-binding protein involved in microtubule formation. This Arabidopsis thaliana (Mouse-ear cress) protein is Thioredoxin domain-containing protein PLP3A (PLP3A).